A 448-amino-acid polypeptide reads, in one-letter code: Glutamyl-tRNA reductase (448 aa).

Residues 49–52 (TCNR), Ser-109, 114–116 (ETQ), and Gln-120 contribute to the substrate site. Cys-50 (nucleophile) is an active-site residue. An NADP(+)-binding site is contributed by 189-194 (GAGETG). The interval 427–448 (PVDEVEETDATSAKAPLRALMR) is disordered.

The protein belongs to the glutamyl-tRNA reductase family. As to quaternary structure, homodimer.

It catalyses the reaction (S)-4-amino-5-oxopentanoate + tRNA(Glu) + NADP(+) = L-glutamyl-tRNA(Glu) + NADPH + H(+). Its pathway is porphyrin-containing compound metabolism; protoporphyrin-IX biosynthesis; 5-aminolevulinate from L-glutamyl-tRNA(Glu): step 1/2. Catalyzes the NADPH-dependent reduction of glutamyl-tRNA(Glu) to glutamate 1-semialdehyde (GSA). This chain is Glutamyl-tRNA reductase, found in Exiguobacterium sp. (strain ATCC BAA-1283 / AT1b).